Reading from the N-terminus, the 455-residue chain is J protein JJJ2 (455 aa).

One can recognise a J domain in the interval 12–76 (TYYSILGVPT…QLRAEYDKKL (65 aa)). Residues 104-241 (RNSKPYEQQP…RKKSEKKATP (138 aa)) are disordered. Residues 133 to 144 (NSNPHNENSSNN) show a composition bias toward low complexity. The segment covering 156–168 (TLSKDSEDKHGTD) has biased composition (basic and acidic residues).

Its subcellular location is the cytoplasm. The protein resides in the nucleus. This chain is J protein JJJ2 (JJJ2), found in Candida glabrata (strain ATCC 2001 / BCRC 20586 / JCM 3761 / NBRC 0622 / NRRL Y-65 / CBS 138) (Yeast).